The sequence spans 572 residues: Proline--tRNA ligase (572 aa).

It belongs to the class-II aminoacyl-tRNA synthetase family. ProS type 1 subfamily. In terms of assembly, homodimer.

The protein resides in the cytoplasm. It catalyses the reaction tRNA(Pro) + L-proline + ATP = L-prolyl-tRNA(Pro) + AMP + diphosphate. In terms of biological role, catalyzes the attachment of proline to tRNA(Pro) in a two-step reaction: proline is first activated by ATP to form Pro-AMP and then transferred to the acceptor end of tRNA(Pro). As ProRS can inadvertently accommodate and process non-cognate amino acids such as alanine and cysteine, to avoid such errors it has two additional distinct editing activities against alanine. One activity is designated as 'pretransfer' editing and involves the tRNA(Pro)-independent hydrolysis of activated Ala-AMP. The other activity is designated 'posttransfer' editing and involves deacylation of mischarged Ala-tRNA(Pro). The misacylated Cys-tRNA(Pro) is not edited by ProRS. The sequence is that of Proline--tRNA ligase from Dichelobacter nodosus (strain VCS1703A).